The chain runs to 452 residues: Cell division protein FtsZ (452 aa).

Residues 24–28 (GAGSN), 111–113 (GTG), E142, R146, and D190 each bind GTP.

This sequence belongs to the FtsZ family. Homodimer. Polymerizes to form a dynamic ring structure in a strictly GTP-dependent manner. Interacts directly with several other division proteins.

It localises to the cytoplasm. In terms of biological role, essential cell division protein that forms a contractile ring structure (Z ring) at the future cell division site. The regulation of the ring assembly controls the timing and the location of cell division. One of the functions of the FtsZ ring is to recruit other cell division proteins to the septum to produce a new cell wall between the dividing cells. Binds GTP and shows GTPase activity. This Rickettsia typhi (strain ATCC VR-144 / Wilmington) protein is Cell division protein FtsZ.